Reading from the N-terminus, the 716-residue chain is Mitogen-activated protein kinase kinase kinase 5 (716 aa).

Residues methionine 1–serine 27 are compositionally biased toward low complexity. Disordered stretches follow at residues methionine 1–histidine 42, alanine 74–serine 98, alanine 119–asparagine 180, and tyrosine 238–glycine 302. Residues aspartate 31–arginine 40 are compositionally biased toward basic and acidic residues. Positions serine 75–alanine 91 are enriched in polar residues. Residues glycine 124–serine 137 show a composition bias toward basic and acidic residues. 3 stretches are compositionally biased toward polar residues: residues aspartate 138 to asparagine 150, glutamate 162 to asparagine 173, and alanine 242 to histidine 251. Residues arginine 263 to proline 273 show a composition bias toward low complexity. The region spanning tryptophan 346–leucine 607 is the Protein kinase domain. ATP-binding positions include isoleucine 352 to valine 360 and lysine 375. Aspartate 472 acts as the Proton acceptor in catalysis. The segment covering serine 610 to proline 633 has biased composition (polar residues). Positions serine 610–leucine 716 are disordered. Serine 617 and serine 622 each carry phosphoserine; by PBL27. Positions serine 634 to proline 648 are enriched in basic and acidic residues. Composition is skewed to polar residues over residues asparagine 652 to glycine 661 and leucine 674 to serine 685. Serine 658 and serine 660 each carry phosphoserine; by PBL27. Threonine 677 is subject to Phosphothreonine; by PBL27. Serine 685 is subject to Phosphoserine; by PBL27. Residues serine 703–leucine 716 show a composition bias toward basic and acidic residues.

This sequence belongs to the protein kinase superfamily. STE Ser/Thr protein kinase family. MAP kinase kinase kinase subfamily. Interacts with PBL27 at the plasma membrane; disassociation is induced by chitin perception by the CERK1 complex. Interacts with MKK2, MKK4, and MKK5 mainly in the cytosol. In terms of processing, phosphorylated by PBL27 during chitin-mediated signaling in a CERK1-dependent manner. In terms of tissue distribution, mostly expressed in flower buds. Also present in pollen, roots, leaves and seedlings, and, at low levels, in stems and immature siliques.

It localises to the cell membrane. Its subcellular location is the cytoplasm. It is found in the cytosol. It catalyses the reaction L-seryl-[protein] + ATP = O-phospho-L-seryl-[protein] + ADP + H(+). The enzyme catalyses L-threonyl-[protein] + ATP = O-phospho-L-threonyl-[protein] + ADP + H(+). Its function is as follows. Mitogen-activated protein kinase (MAPK) involved in the transduction of signal between the host cell surface chitin receptor complex CERK1-LYK5 and the intracellular MAPK cascade that leads to chitin-induced immunity. Phosphorylates and activates MAPK targets (e.g. MKK4, MKK5, and possibly MKK2) when phosphorylated by PBL27 after elicitation by chitin. Required for resistance to the fungus A.brassicicola. This Arabidopsis thaliana (Mouse-ear cress) protein is Mitogen-activated protein kinase kinase kinase 5.